The chain runs to 348 residues: Fe-S cluster assembly protein DRE2 (348 aa).

The segment at 1–158 (MSQYKTGLLL…LPTFKKASSS (158 aa)) is N-terminal SAM-like domain. The segment at 137 to 170 (KTNNTKLQSGSKLPTFKKASSSTSNLPSFKKADH) is disordered. A compositionally biased stretch (polar residues) spans 144-163 (QSGSKLPTFKKASSSTSNLP). The tract at residues 159-242 (TSNLPSFKKA…EEELIDEDGS (84 aa)) is linker. S206 is subject to Phosphoserine. 4 residues coordinate [2Fe-2S] cluster: C252, C263, C266, and C268. The tract at residues 252-268 (CGKSKTKKKKACKDCTC) is fe-S binding site A. Residues C311, C314, C322, and C325 each contribute to the [4Fe-4S] cluster site. 2 consecutive short sequence motifs (cx2C motif) follow at residues 311-314 (CGSC) and 322-325 (CSGC). Residues 311–325 (CGSCSLGDAFRCSGC) are fe-S binding site B.

This sequence belongs to the anamorsin family. Monomer. Interacts with TAH18. Interacts with MIA40. It depends on [2Fe-2S] cluster as a cofactor. [4Fe-4S] cluster serves as cofactor. Post-translationally, ubiquitinated.

The protein resides in the cytoplasm. It is found in the mitochondrion intermembrane space. Functionally, component of the cytosolic iron-sulfur (Fe-S) protein assembly (CIA) machinery required for the maturation of extramitochondrial Fe-S proteins. Part of an electron transfer chain functioning in an early step of cytosolic Fe-S biogenesis, facilitating the de novo assembly of a [4Fe-4S] cluster on the scaffold complex CFD1-NBP35. Electrons are transferred to DRE2 from NADPH via the FAD- and FMN-containing protein TAH18. TAH18-DRE2 are also required for the assembly of the diferric tyrosyl radical cofactor of ribonucleotide reductase (RNR), probably by providing electrons for reduction during radical cofactor maturation in the catalytic small subunit RNR2. Has anti-apoptotic effects in the cell. Involved in negative control of H(2)O(2)-induced cell death. The polypeptide is Fe-S cluster assembly protein DRE2 (Saccharomyces cerevisiae (strain ATCC 204508 / S288c) (Baker's yeast)).